A 122-amino-acid polypeptide reads, in one-letter code: Histone H2B 1 (122 aa).

Residues 1-30 (MPPKPSAKGAKKAAKTVTKPKDGKKRRHAR) form a disordered region. An O-linked (GlcNAc) serine glycan is attached at S109. A Glycyl lysine isopeptide (Lys-Gly) (interchain with G-Cter in ubiquitin) cross-link involves residue K117.

The protein belongs to the histone H2B family. In terms of assembly, the nucleosome is a histone octamer containing two molecules each of H2A, H2B, H3 and H4 assembled in one H3-H4 heterotetramer and two H2A-H2B heterodimers. The octamer wraps approximately 147 bp of DNA. Post-translationally, monoubiquitination of Lys-117 gives a specific tag for epigenetic transcriptional activation and is also prerequisite for histone H3 'Lys-4' and 'Lys-79' methylation. In terms of processing, glcNAcylation at Ser-109 promotes monoubiquitination of Lys-117. It fluctuates in response to extracellular glucose, and associates with transcribed genes.

It is found in the nucleus. The protein resides in the chromosome. Core component of nucleosome. Nucleosomes wrap and compact DNA into chromatin, limiting DNA accessibility to the cellular machineries which require DNA as a template. Histones thereby play a central role in transcription regulation, DNA repair, DNA replication and chromosomal stability. DNA accessibility is regulated via a complex set of post-translational modifications of histones, also called histone code, and nucleosome remodeling. The chain is Histone H2B 1 (his-11) from Caenorhabditis elegans.